Here is a 144-residue protein sequence, read N- to C-terminus: MRWPMQNRTTAVIAVALATTALVACSSRSASAVSSTATVTVDGKDSTMHIVKCTQLEWYRMINIGSDFAGAKIVIDQRAHPVTAESVRIQNLNGFTGMYSRGGDGNADLRLSGDKFTITGTAHGYKADKPGDAATATFKIVTAC.

The N-terminal stretch at 1–24 is a signal peptide; the sequence is MRWPMQNRTTAVIAVALATTALVA. C25 carries N-palmitoyl cysteine lipidation. C25 carries S-diacylglycerol cysteine lipidation.

Belongs to the mycobacterial 19 kDa antigen family.

The protein resides in the cell membrane. In Mycobacterium avium subsp. hominissuis (strain TH135), this protein is Putative lipoprotein MAH_0816.